A 447-amino-acid chain; its full sequence is MTPKPAGPPDGGWGWVVAAAAFAVNGLSYGLLRSLGLALPDLAEHFERSAQDTAWVSALALAVQQAASPVGSALSTRWGARPVVMVGGVLTSLGLVFSAFARSLLHLYLGLGLLAGSGWALVFAPALGTLSRYFSRRRVLAVGLALTGNGASSLLLAPALQFLLDTFGWRGALLLLGAVTLHLTPCGALLRPLALSGDPLAPPRTPLAALGLGLFKRRAFSVFALGTALIGGGYFVPYVHLGPHALDQGMGGYGAALVVAVAAVGDACARLASGWLADQGWVPLPRLLVVFGSLTGLGVLAMGLVPTVGTEEGWGAPLLAAAGAYGLSAGSYAPLVFGVLPGLVGIGGVVQATGLVMMLMSLGGLLGPPLSGFLRDKTGDFSASFLVCSSFILSGSFIYMGLPRALPSCRPASPPATPPPERGELLPVPQVSLLSAGGTGSIRDTTC.

At methionine 1 to glycine 11 the chain is on the cytoplasmic side. Transmembrane regions (helical) follow at residues glycine 12–leucine 32, alanine 54–leucine 74, alanine 80–phenylalanine 100, leucine 107–leucine 127, valine 139–alanine 159, phenylalanine 162–histidine 182, alanine 219–valine 239, glycine 249–alanine 269, leucine 288–valine 308, glycine 330–valine 350, glycine 354–leucine 374, and alanine 383–proline 403. Topologically, residues arginine 404–cysteine 447 are cytoplasmic.

It belongs to the major facilitator superfamily. Monocarboxylate porter (TC 2.A.1.13) family. In terms of assembly, interacts with isoform 2 of BSG.

The protein localises to the endoplasmic reticulum membrane. Its subcellular location is the cell membrane. It carries out the reaction pyruvate(out) + H(+)(out) = pyruvate(in) + H(+)(in). In terms of biological role, proton-linked monocarboxylate transporter. It catalyzes the transport of pyruvate across the plasma membrane. Probably involved in hepatic lipid metabolism: overexpression results in an increase of triacylglycerol(TAG) levels, small increases in intracellular diacylglycerols and decreases in lysophosphatidylcholine, cholesterol ester and sphingomyelin lipids. This chain is Monocarboxylate transporter 11 (Slc16a11), found in Mus musculus (Mouse).